The following is a 308-amino-acid chain: Probable GTP 3',8-cyclase (308 aa).

The 221-residue stretch at 4–224 (RFGRPLEDLR…QIRKKHFRPR (221 aa)) folds into the Radical SAM core domain. Residue R13 participates in GTP binding. Residues C20, C24, and C27 each coordinate [4Fe-4S] cluster. K60 contributes to the GTP binding site. S-adenosyl-L-methionine is bound at residue G64. Position 90 (T90) interacts with GTP. Residue S114 coordinates S-adenosyl-L-methionine. K151 is a binding site for GTP. [4Fe-4S] cluster is bound by residues C245 and C248. 250-252 (RIR) provides a ligand contact to GTP. [4Fe-4S] cluster is bound at residue C262.

The protein belongs to the radical SAM superfamily. MoaA family. It depends on [4Fe-4S] cluster as a cofactor.

The enzyme catalyses GTP + AH2 + S-adenosyl-L-methionine = (8S)-3',8-cyclo-7,8-dihydroguanosine 5'-triphosphate + 5'-deoxyadenosine + L-methionine + A + H(+). Its pathway is cofactor biosynthesis; molybdopterin biosynthesis. In terms of biological role, catalyzes the cyclization of GTP to (8S)-3',8-cyclo-7,8-dihydroguanosine 5'-triphosphate. In Saccharolobus islandicus (strain Y.N.15.51 / Yellowstone #2) (Sulfolobus islandicus), this protein is Probable GTP 3',8-cyclase.